Consider the following 569-residue polypeptide: Atlastin-2 (569 aa).

The segment at 1-49 (MAEGGSLRNRTRFGSRSNEAMNHVDYPDENFVEEIQLNSDTEVMEKPRP) is N-terminal hypervariable region (HVR). Topologically, residues 1–464 (MAEGGSLRNR…NIFYAARTPA (464 aa)) are cytoplasmic. In terms of domain architecture, GB1/RHD3-type G spans 80–324 (DLNVVVLSVA…LVPLLLAPEN (245 aa)). GDP-binding residues include Arg93, Lys94, Gly95, Lys96, Ser97, Phe98, Gln163, Arg232, and Asp233. Arg93, Lys94, Gly95, Lys96, Ser97, and Phe98 together coordinate GTP. Position 97 (Ser97) interacts with Mg(2+). The GTP site is built by Arg232 and Asp233. A coiled-coil region spans residues 244–272 (LEGGNKFLEKRLQVKQNQHEELQNVRKHI). Residues Val291 and Asn294 each coordinate GDP. Val291 lines the GTP pocket. The tract at residues 362–453 (MLQATAEANN…YANFLKHNDG (92 aa)) is 3HB (three-helix bundle) domain. Residues 454–462 (KNIFYAART) form a linker region. The helical transmembrane segment at 465 to 485 (TLFAVMFAMYIISGLTGFIGM) threads the bilayer. At 486–487 (NS) the chain is on the lumenal side. The helical transmembrane segment at 488 to 508 (IATICNLIMGLTLLSFCTWAY) threads the bilayer. The Cytoplasmic portion of the chain corresponds to 509-569 (VKYSGEFREL…DQVSGRLKTN (61 aa)). The interval 535–569 (KPLSDNLMEDNIRQTVRNSIKAGLTDQVSGRLKTN) is autoinhibitory domain.

It belongs to the TRAFAC class dynamin-like GTPase superfamily. GB1/RHD3 GTPase family. GB1 subfamily. As to quaternary structure, monomeric and homodimeric. The homodimer, transiently formed by two molecules on opposing membranes, is the active form mediating ER membrane fusion.

It is found in the endoplasmic reticulum membrane. It catalyses the reaction GTP + H2O = GDP + phosphate + H(+). Atlastin-2 (ATL2) is a membrane-anchored GTPase that mediates the GTP-dependent fusion of endoplasmic reticulum (ER) membranes, maintaining the continuous ER network. It facilitates the formation of three-way junctions where ER tubules intersect. Two atlastin-2 on neighboring ER tubules bind GTP and form loose homodimers through the GB1/RHD3-type G domains and 3HB regions. Upon GTP hydrolysis, the 3HB regions tighten, pulling the membranes together to drive their fusion. After fusion, the homodimer disassembles upon release of inorganic phosphate (Pi). Subsequently, GDP dissociates, resetting the monomers to a conformation ready for a new fusion cycle. The chain is Atlastin-2 (atl2) from Xenopus laevis (African clawed frog).